The sequence spans 45 residues: Protein PsbN (45 aa).

The helical transmembrane segment at 12-30 threads the bilayer; the sequence is FLSRSLVSFTGYALYTAFG.

This sequence belongs to the PsbN family.

It is found in the plastid. Its subcellular location is the chloroplast thylakoid membrane. May play a role in photosystem I and II biogenesis. The protein is Protein PsbN of Adiantum capillus-veneris (Maidenhair fern).